The chain runs to 732 residues: 1,4-alpha-glucan branching enzyme GlgB (732 aa).

Aspartate 415 acts as the Nucleophile in catalysis. Residue glutamate 468 is the Proton donor of the active site.

The protein belongs to the glycosyl hydrolase 13 family. GlgB subfamily. In terms of assembly, monomer.

It catalyses the reaction Transfers a segment of a (1-&gt;4)-alpha-D-glucan chain to a primary hydroxy group in a similar glucan chain.. The protein operates within glycan biosynthesis; glycogen biosynthesis. Catalyzes the formation of the alpha-1,6-glucosidic linkages in glycogen by scission of a 1,4-alpha-linked oligosaccharide from growing alpha-1,4-glucan chains and the subsequent attachment of the oligosaccharide to the alpha-1,6 position. This Nitrosomonas eutropha (strain DSM 101675 / C91 / Nm57) protein is 1,4-alpha-glucan branching enzyme GlgB.